A 79-amino-acid polypeptide reads, in one-letter code: Large ribosomal subunit protein uL29 (79 aa).

The protein belongs to the universal ribosomal protein uL29 family.

In Nocardia farcinica (strain IFM 10152), this protein is Large ribosomal subunit protein uL29.